Consider the following 194-residue polypeptide: Phosphoheptose isomerase (194 aa).

One can recognise an SIS domain in the interval 31–186 (ICQRFQAGNK…CEQVESRLFA (156 aa)). 46 to 48 (NGG) serves as a coordination point for substrate. 2 residues coordinate Zn(2+): histidine 55 and glutamate 59. Substrate is bound by residues glutamate 59, 88-89 (ND), 114-116 (STS), serine 119, and glutamine 166. Zn(2+)-binding residues include glutamine 166 and histidine 174.

This sequence belongs to the SIS family. GmhA subfamily. Zn(2+) is required as a cofactor.

It is found in the cytoplasm. The enzyme catalyses 2 D-sedoheptulose 7-phosphate = D-glycero-alpha-D-manno-heptose 7-phosphate + D-glycero-beta-D-manno-heptose 7-phosphate. Its pathway is carbohydrate biosynthesis; D-glycero-D-manno-heptose 7-phosphate biosynthesis; D-glycero-alpha-D-manno-heptose 7-phosphate and D-glycero-beta-D-manno-heptose 7-phosphate from sedoheptulose 7-phosphate: step 1/1. Catalyzes the isomerization of sedoheptulose 7-phosphate in D-glycero-D-manno-heptose 7-phosphate. The sequence is that of Phosphoheptose isomerase from Synechocystis sp. (strain ATCC 27184 / PCC 6803 / Kazusa).